We begin with the raw amino-acid sequence, 487 residues long: N-succinylglutamate 5-semialdehyde dehydrogenase (487 aa).

Residue 221-226 (GSSDTG) participates in NAD(+) binding. Active-site residues include Glu244 and Cys278.

Belongs to the aldehyde dehydrogenase family. AstD subfamily.

It carries out the reaction N-succinyl-L-glutamate 5-semialdehyde + NAD(+) + H2O = N-succinyl-L-glutamate + NADH + 2 H(+). Its pathway is amino-acid degradation; L-arginine degradation via AST pathway; L-glutamate and succinate from L-arginine: step 4/5. Catalyzes the NAD-dependent reduction of succinylglutamate semialdehyde into succinylglutamate. This chain is N-succinylglutamate 5-semialdehyde dehydrogenase, found in Burkholderia multivorans (strain ATCC 17616 / 249).